Consider the following 131-residue polypeptide: Small ribosomal subunit protein uS11 (131 aa).

It belongs to the universal ribosomal protein uS11 family. In terms of assembly, part of the 30S ribosomal subunit. Interacts with proteins S7 and S18. Binds to IF-3.

Located on the platform of the 30S subunit, it bridges several disparate RNA helices of the 16S rRNA. Forms part of the Shine-Dalgarno cleft in the 70S ribosome. The protein is Small ribosomal subunit protein uS11 of Deinococcus geothermalis (strain DSM 11300 / CIP 105573 / AG-3a).